A 399-amino-acid chain; its full sequence is tRNA-dihydrouridine(16/17) synthase [NAD(P)(+)] (399 aa).

FMN contacts are provided by residues 24 to 26 (PMV) and Q80. C109 acts as the Proton donor in catalysis. FMN is bound by residues K148, H176, 211–213 (NGN), and 235–236 (AE).

This sequence belongs to the Dus family. Dus1 subfamily. FMN serves as cofactor.

It localises to the nucleus. The protein localises to the mitochondrion. It catalyses the reaction 5,6-dihydrouridine(16) in tRNA + NADP(+) = uridine(16) in tRNA + NADPH + H(+). It carries out the reaction 5,6-dihydrouridine(16) in tRNA + NAD(+) = uridine(16) in tRNA + NADH + H(+). The enzyme catalyses 5,6-dihydrouridine(17) in tRNA + NAD(+) = uridine(17) in tRNA + NADH + H(+). The catalysed reaction is 5,6-dihydrouridine(17) in tRNA + NADP(+) = uridine(17) in tRNA + NADPH + H(+). It catalyses the reaction a 5,6-dihydrouridine in mRNA + NAD(+) = a uridine in mRNA + NADH + H(+). It carries out the reaction a 5,6-dihydrouridine in mRNA + NADP(+) = a uridine in mRNA + NADPH + H(+). In terms of biological role, catalyzes the synthesis of dihydrouridine, a modified base found in the D-loop of most tRNAs. Also able to mediate dihydrouridylation of some mRNAs, thereby affecting their translation. The polypeptide is tRNA-dihydrouridine(16/17) synthase [NAD(P)(+)] (Schizosaccharomyces pombe (strain 972 / ATCC 24843) (Fission yeast)).